The following is a 234-amino-acid chain: 1-(5-phosphoribosyl)-5-[(5-phosphoribosylamino)methylideneamino] imidazole-4-carboxamide isomerase (234 aa).

Asp-9 (proton acceptor) is an active-site residue. Catalysis depends on Asp-131, which acts as the Proton donor.

This sequence belongs to the HisA/HisF family.

It is found in the cytoplasm. The enzyme catalyses 1-(5-phospho-beta-D-ribosyl)-5-[(5-phospho-beta-D-ribosylamino)methylideneamino]imidazole-4-carboxamide = 5-[(5-phospho-1-deoxy-D-ribulos-1-ylimino)methylamino]-1-(5-phospho-beta-D-ribosyl)imidazole-4-carboxamide. It participates in amino-acid biosynthesis; L-histidine biosynthesis; L-histidine from 5-phospho-alpha-D-ribose 1-diphosphate: step 4/9. The polypeptide is 1-(5-phosphoribosyl)-5-[(5-phosphoribosylamino)methylideneamino] imidazole-4-carboxamide isomerase (Staphylococcus aureus (strain bovine RF122 / ET3-1)).